The primary structure comprises 259 residues: Undecaprenyl-diphosphatase 4 (259 aa).

8 helical membrane passes run 1–21, 39–59, 71–91, 99–119, 133–153, 173–193, 208–228, and 239–259; these read MNWL…FLPI, AGLF…FIYY, FSKL…IGLL, ISKT…FLYM, ITYK…FPAI, AAYF…ILQF, SLIV…SWMI, and FAYY…THVF.

Belongs to the UppP family.

The protein resides in the cell membrane. It catalyses the reaction di-trans,octa-cis-undecaprenyl diphosphate + H2O = di-trans,octa-cis-undecaprenyl phosphate + phosphate + H(+). Catalyzes the dephosphorylation of undecaprenyl diphosphate (UPP). Confers resistance to bacitracin. In Bacillus thuringiensis (strain Al Hakam), this protein is Undecaprenyl-diphosphatase 4.